The following is a 779-amino-acid chain: Endoribonuclease YSH1 (779 aa).

His-68, His-70, Asp-72, His-73, His-163, and Asp-184 together coordinate Zn(2+). His-408 acts as the Proton donor in catalysis. Position 430 (His-430) interacts with Zn(2+). Position 517 is a phosphoserine; by ATM or ATR (Ser-517).

Belongs to the metallo-beta-lactamase superfamily. RNA-metabolizing metallo-beta-lactamase-like family. CPSF2/YSH1 subfamily. In terms of assembly, component of the cleavage and polyadenylation factor (CPF) complex, which is composed of at least PTI1, SYC1, SSU72, GLC7, MPE1, REF2, PFS2, PTA1, YSH1/BRR5, SWD2, CFT2/YDH1, YTH1, CFT1/YHH1, FIP1 and PAP1. Interacts with FIP1, PFS2, RNA14 and YTH1. Requires Zn(2+) as cofactor.

The protein resides in the nucleus. Component of the cleavage and polyadenylation factor (CPF) complex, which plays a key role in polyadenylation-dependent pre-mRNA 3'-end formation and cooperates with cleavage factors including the CFIA complex and NAB4/CFIB. Has endonuclease activity. The polypeptide is Endoribonuclease YSH1 (YSH1) (Saccharomyces cerevisiae (strain ATCC 204508 / S288c) (Baker's yeast)).